Here is a 328-residue protein sequence, read N- to C-terminus: L-serine dehydratase/L-threonine deaminase (328 aa).

Lysine 41 is subject to N6-(pyridoxal phosphate)lysine. Residue proline 128 coordinates pyridoxal 5'-phosphate.

The protein belongs to the serine/threonine dehydratase family. Homodimer. Requires pyridoxal 5'-phosphate as cofactor. As to expression, predominantly expressed in the perivenous regions of the liver.

The protein resides in the cytoplasm. The catalysed reaction is L-serine = pyruvate + NH4(+). It carries out the reaction L-threonine = 2-oxobutanoate + NH4(+). The protein operates within carbohydrate biosynthesis; gluconeogenesis. Catalyzes the pyridoxal-phosphate-dependent dehydrative deamination of L-threonine and L-serine to ammonia and alpha-ketobutyrate and pyruvate, respectively. In Homo sapiens (Human), this protein is L-serine dehydratase/L-threonine deaminase (SDS).